The following is a 534-amino-acid chain: Arginine--tRNA ligase (534 aa).

Residues 120-130 (ANPTGFLHLGH) carry the 'HIGH' region motif.

This sequence belongs to the class-I aminoacyl-tRNA synthetase family. As to quaternary structure, monomer.

It localises to the cytoplasm. The enzyme catalyses tRNA(Arg) + L-arginine + ATP = L-arginyl-tRNA(Arg) + AMP + diphosphate. In Mesomycoplasma hyopneumoniae (strain 7448) (Mycoplasma hyopneumoniae), this protein is Arginine--tRNA ligase.